We begin with the raw amino-acid sequence, 431 residues long: Tryptophan--tRNA ligase (431 aa).

ATP contacts are provided by residues 12 to 14 (TPS) and 20 to 21 (GN). The short motif at 13 to 21 (PSGTPHLGN) is the 'HIGH' region element. L-tryptophan is bound at residue aspartate 145. Residues 157–159 (GRD), leucine 197, and 204–208 (KMSKS) contribute to the ATP site. The short motif at 204-208 (KMSKS) is the 'KMSKS' region element.

Belongs to the class-I aminoacyl-tRNA synthetase family. In terms of assembly, homodimer.

Its subcellular location is the cytoplasm. The enzyme catalyses tRNA(Trp) + L-tryptophan + ATP = L-tryptophyl-tRNA(Trp) + AMP + diphosphate + H(+). Catalyzes the attachment of tryptophan to tRNA(Trp). The chain is Tryptophan--tRNA ligase from Xanthomonas campestris pv. campestris (strain ATCC 33913 / DSM 3586 / NCPPB 528 / LMG 568 / P 25).